Here is a 76-residue protein sequence, read N- to C-terminus: Envelope small membrane protein (76 aa).

The Virion surface segment spans residues 1–16; the sequence is MYSFVSEETGTLIVNS. The helical transmembrane segment at 17 to 37 threads the bilayer; sequence VLLFLAFVVFLLVTLAILTAL. Residues 38 to 76 are Intravirion-facing; that stretch reads RLCAYCCNIVNVSLVKPTVYVYSRVKNLNSSEGVPDLLV.

Belongs to the betacoronaviruses E protein family. Homopentamer. Interacts with membrane protein M in the budding compartment of the host cell, which is located between endoplasmic reticulum and the Golgi complex. Interacts with Nucleoprotein.

It localises to the host Golgi apparatus membrane. Its function is as follows. Plays a central role in virus morphogenesis and assembly. Acts as a viroporin and self-assembles in host membranes forming pentameric protein-lipid pores that allow ion transport. Also plays a role in the induction of apoptosis. The polypeptide is Envelope small membrane protein (Rhinolophus sinicus (Chinese rufous horseshoe bat)).